A 646-amino-acid polypeptide reads, in one-letter code: Lipoteichoic acid synthase (646 aa).

The Cytoplasmic segment spans residues methionine 1–lysine 7. A helical transmembrane segment spans residues isoleucine 8–serine 28. The Extracellular portion of the chain corresponds to tyrosine 29–asparagine 43. Residues leucine 44–phenylalanine 64 traverse the membrane as a helical segment. Over lysine 65–lysine 68 the chain is Cytoplasmic. Residues alanine 69 to valine 89 form a helical membrane-spanning segment. Over tyrosine 90 to serine 119 the chain is Extracellular. The helical transmembrane segment at phenylalanine 120–phenylalanine 140 threads the bilayer. Topologically, residues lysine 141–lysine 153 are cytoplasmic. A helical transmembrane segment spans residues phenylalanine 154–glutamate 174. The Extracellular portion of the chain corresponds to threonine 175 to lysine 646. Residues glutamate 255 and threonine 300 each contribute to the Mn(2+) site. Residue threonine 300 is part of the active site. Position 416 (histidine 416) interacts with substrate. 2 residues coordinate Mn(2+): aspartate 475 and histidine 476. The segment covering asparagine 623 to threonine 638 has biased composition (basic and acidic residues). Residues asparagine 623–lysine 646 are disordered.

The protein belongs to the LTA synthase family. Proteolytically cleaved.

The protein localises to the cell membrane. It is found in the secreted. It participates in cell wall biogenesis; lipoteichoic acid biosynthesis. Its function is as follows. Catalyzes the polymerization of lipoteichoic acid (LTA) polyglycerol phosphate, a reaction that presumably uses phosphatidylglycerol (PG) as substrate. Is required for staphylococcal growth and cell division process. This is Lipoteichoic acid synthase (ltaS) from Staphylococcus aureus (strain USA300).